Consider the following 503-residue polypeptide: MSAIRPEEISSLIKERIANFKSEIEVVDVGTVIQVGDGIARVHGLEKAMQGELLEFQNGVMGMVLNLEEDNVGVVIMGPFRDIKEGDTVKRTGRVMEVPVGEALLGRVVNPLGQPIDGQGPIANNGFRPIESPAPGVMARKSVHEPLQTGIKAIDAMIPVGRGQRELIIGDRQTGKTAVALDTIINQKGKDMICIYVAIGQKQSTVANIVETLRKAGALEYTIIVSATASDPAPMLYLAPYTGVTMAEYFMYKGGHVLCVYDDLSKQAAAYREMSLLLRRPPGREAYPGDVFYLHSRLLERAAKLSDDLGAGSITALPFIETQAGDISAYIPTNVISITDGQIFLETDLFNAGQRPAVNTGLSVSRVGGSAQIKAMKKVAGPLKLELAQYRELAAFAQFGSDLDKATQARLTRGERLMEIMKQGQFDPMPVEKQVASIYSATRGFLDDIPVAEVRRFEKEMLSFLDSNKPQLLEHIRTTKDLPDEKEFNAAIEEFKKGFSVTR.

Position 170-177 (170-177) interacts with ATP; that stretch reads GDRQTGKT.

Belongs to the ATPase alpha/beta chains family. As to quaternary structure, F-type ATPases have 2 components, CF(1) - the catalytic core - and CF(0) - the membrane proton channel. CF(1) has five subunits: alpha(3), beta(3), gamma(1), delta(1), epsilon(1). CF(0) has three main subunits: a(1), b(2) and c(9-12). The alpha and beta chains form an alternating ring which encloses part of the gamma chain. CF(1) is attached to CF(0) by a central stalk formed by the gamma and epsilon chains, while a peripheral stalk is formed by the delta and b chains.

The protein resides in the cell membrane. The catalysed reaction is ATP + H2O + 4 H(+)(in) = ADP + phosphate + 5 H(+)(out). Functionally, produces ATP from ADP in the presence of a proton gradient across the membrane. The alpha chain is a regulatory subunit. This chain is ATP synthase subunit alpha, found in Brevibacillus brevis (strain 47 / JCM 6285 / NBRC 100599).